We begin with the raw amino-acid sequence, 530 residues long: GMP synthase [glutamine-hydrolyzing] (530 aa).

A Glutamine amidotransferase type-1 domain is found at 4-205 (RILILDYGSQ…VREICGCEGD (202 aa)). C84 functions as the Nucleophile in the catalytic mechanism. Active-site residues include H179 and E181. Residues 206 to 398 (WNMPDYISEA…LGLPPQMVYR (193 aa)) enclose the GMPS ATP-PPase domain. 233 to 239 (SGGVDSS) is a binding site for ATP.

As to quaternary structure, homodimer.

It carries out the reaction XMP + L-glutamine + ATP + H2O = GMP + L-glutamate + AMP + diphosphate + 2 H(+). The protein operates within purine metabolism; GMP biosynthesis; GMP from XMP (L-Gln route): step 1/1. Functionally, catalyzes the synthesis of GMP from XMP. This chain is GMP synthase [glutamine-hydrolyzing], found in Bordetella avium (strain 197N).